Here is a 404-residue protein sequence, read N- to C-terminus: Trigger factor (404 aa).

Positions lysine 160–proline 225 constitute a PPIase FKBP-type domain.

This sequence belongs to the FKBP-type PPIase family. Tig subfamily.

Its subcellular location is the cytoplasm. It catalyses the reaction [protein]-peptidylproline (omega=180) = [protein]-peptidylproline (omega=0). Functionally, involved in protein export. Acts as a chaperone by maintaining the newly synthesized protein in an open conformation. Functions as a peptidyl-prolyl cis-trans isomerase. This is Trigger factor from Thermus thermophilus (strain ATCC 27634 / DSM 579 / HB8).